A 379-amino-acid polypeptide reads, in one-letter code: MTIVRKTHPIMKMVNHAFIDLPAPSNISGWWNFGSLLGLCLIIQIASGLFLAMHYTPDTLTAFSSVTHICRDVNYGWLIRYMHANGASLFFICLYLHIGRGIYYGSYSYMETWNIGILLLFRTMATAFMGYVLPWGQMSFWGATVITNLLSAIPYIGTDLVEWIWGGFSVDKATLNRFFAFHFILPFIIAAMAMVHLLFLHETGSNNPLGIPSDCDKIPFHPYYTTKDFLGIVLLLAFFFTLVLFFPDLLGDPDNYSPANPLSTPPHIKPEWYFLFAYAILRSIPNKMGGVIALILSILILALFPHIQTGKQRSLMFRPISQFLFWLLVSDVLVLTWIGGQPVEPPFIIIGQIASVLYFTFILAFLPIAGLNENKMLKW.

Transmembrane regions (helical) follow at residues 33-53 (FGSL…FLAM), 77-98 (WLIR…YLHI), 113-133 (WNIG…GYVL), and 178-198 (FFAF…VHLL). His83 and His97 together coordinate heme b. Residues His182 and His196 each coordinate heme b. His201 provides a ligand contact to a ubiquinone. The next 4 membrane-spanning stretches (helical) occupy residues 226-246 (TKDF…VLFF), 288-308 (MGGV…PHIQ), 320-340 (ISQF…WIGG), and 347-367 (FIII…AFLP).

It belongs to the cytochrome b family. As to quaternary structure, the cytochrome bc1 complex contains 11 subunits: 3 respiratory subunits (MT-CYB, CYC1 and UQCRFS1), 2 core proteins (UQCRC1 and UQCRC2) and 6 low-molecular weight proteins (UQCRH/QCR6, UQCRB/QCR7, UQCRQ/QCR8, UQCR10/QCR9, UQCR11/QCR10 and a cleavage product of UQCRFS1). This cytochrome bc1 complex then forms a dimer. Heme b serves as cofactor.

It is found in the mitochondrion inner membrane. In terms of biological role, component of the ubiquinol-cytochrome c reductase complex (complex III or cytochrome b-c1 complex) that is part of the mitochondrial respiratory chain. The b-c1 complex mediates electron transfer from ubiquinol to cytochrome c. Contributes to the generation of a proton gradient across the mitochondrial membrane that is then used for ATP synthesis. This chain is Cytochrome b (MT-CYB), found in Dipodomys ordii (Ord's kangaroo rat).